A 338-amino-acid chain; its full sequence is Lipoate-protein ligase A (338 aa).

The BPL/LPL catalytic domain occupies 29–216 (PATQRVLFLW…AFFAYYGERV (188 aa)). Residues R71, 76–79 (GAVF), and K134 each bind ATP. A (R)-lipoate-binding site is contributed by K134.

The protein belongs to the LplA family. In terms of assembly, monomer.

Its subcellular location is the cytoplasm. The catalysed reaction is L-lysyl-[lipoyl-carrier protein] + (R)-lipoate + ATP = N(6)-[(R)-lipoyl]-L-lysyl-[lipoyl-carrier protein] + AMP + diphosphate + H(+). It participates in protein modification; protein lipoylation via exogenous pathway; protein N(6)-(lipoyl)lysine from lipoate: step 1/2. The protein operates within protein modification; protein lipoylation via exogenous pathway; protein N(6)-(lipoyl)lysine from lipoate: step 2/2. Its function is as follows. Catalyzes both the ATP-dependent activation of exogenously supplied lipoate to lipoyl-AMP and the transfer of the activated lipoyl onto the lipoyl domains of lipoate-dependent enzymes. The chain is Lipoate-protein ligase A from Cronobacter sakazakii (strain ATCC BAA-894) (Enterobacter sakazakii).